A 119-amino-acid chain; its full sequence is Glucitol operon activator protein (119 aa).

Positions 23 to 29 (QISRFNR) form a DNA-binding region, H-T-H motif.

Its function is as follows. Positive regulator for glucitol operon expression. The chain is Glucitol operon activator protein (gutM) from Escherichia coli (strain K12).